Here is a 491-residue protein sequence, read N- to C-terminus: Probable cytosol aminopeptidase (491 aa).

Residues K260 and D265 each contribute to the Mn(2+) site. Residue K272 is part of the active site. 3 residues coordinate Mn(2+): D284, D343, and E345. R347 is a catalytic residue.

Belongs to the peptidase M17 family. It depends on Mn(2+) as a cofactor.

It is found in the cytoplasm. The enzyme catalyses Release of an N-terminal amino acid, Xaa-|-Yaa-, in which Xaa is preferably Leu, but may be other amino acids including Pro although not Arg or Lys, and Yaa may be Pro. Amino acid amides and methyl esters are also readily hydrolyzed, but rates on arylamides are exceedingly low.. It catalyses the reaction Release of an N-terminal amino acid, preferentially leucine, but not glutamic or aspartic acids.. Its function is as follows. Presumably involved in the processing and regular turnover of intracellular proteins. Catalyzes the removal of unsubstituted N-terminal amino acids from various peptides. The polypeptide is Probable cytosol aminopeptidase (Rippkaea orientalis (strain PCC 8801 / RF-1) (Cyanothece sp. (strain PCC 8801))).